The primary structure comprises 344 residues: N-acetyl-gamma-glutamyl-phosphate reductase (344 aa).

Residue Cys-148 is part of the active site.

It belongs to the NAGSA dehydrogenase family. Type 1 subfamily.

It localises to the cytoplasm. The catalysed reaction is N-acetyl-L-glutamate 5-semialdehyde + phosphate + NADP(+) = N-acetyl-L-glutamyl 5-phosphate + NADPH + H(+). Its pathway is amino-acid biosynthesis; L-arginine biosynthesis; N(2)-acetyl-L-ornithine from L-glutamate: step 3/4. Catalyzes the NADPH-dependent reduction of N-acetyl-5-glutamyl phosphate to yield N-acetyl-L-glutamate 5-semialdehyde. This chain is N-acetyl-gamma-glutamyl-phosphate reductase, found in Clostridium botulinum (strain Eklund 17B / Type B).